The following is a 360-amino-acid chain: Vitopine synthase (360 aa).

This sequence belongs to the lysopine/nopaline/octopine/opine/vitopine dehydrogenases family.

The sequence is that of Vitopine synthase (vis) from Allorhizobium ampelinum (strain ATCC BAA-846 / DSM 112012 / S4) (Agrobacterium vitis (strain S4)).